The chain runs to 219 residues: Ribose-5-phosphate isomerase A (219 aa).

Residues 28–31 (TGST), 81–84 (DGAD), and 94–97 (KGGG) each bind substrate. Catalysis depends on glutamate 103, which acts as the Proton acceptor. Lysine 121 contributes to the substrate binding site.

It belongs to the ribose 5-phosphate isomerase family. In terms of assembly, homodimer.

The enzyme catalyses aldehydo-D-ribose 5-phosphate = D-ribulose 5-phosphate. It functions in the pathway carbohydrate degradation; pentose phosphate pathway; D-ribose 5-phosphate from D-ribulose 5-phosphate (non-oxidative stage): step 1/1. In terms of biological role, catalyzes the reversible conversion of ribose-5-phosphate to ribulose 5-phosphate. In Shewanella oneidensis (strain ATCC 700550 / JCM 31522 / CIP 106686 / LMG 19005 / NCIMB 14063 / MR-1), this protein is Ribose-5-phosphate isomerase A.